We begin with the raw amino-acid sequence, 248 residues long: Pulmonary surfactant-associated protein A1 (248 aa).

An N-terminal signal peptide occupies residues 1-20 (MWLCPLALNLILMAASGAVC). Residues 28–100 (GSPGIPGTPG…PGERGPPGLP (73 aa)) enclose the Collagen-like domain. 9 positions are modified to 4-hydroxyproline: Pro-30, Pro-33, Pro-36, Pro-42, Pro-54, Pro-57, Pro-63, Pro-67, and Pro-70. The tract at residues 31 to 101 (GIPGTPGSHG…GERGPPGLPA (71 aa)) is disordered. Positions 42–51 (PGRDGRDGLK) are enriched in basic and acidic residues. Over residues 54–70 (PGPPGPMGPPGEMPCPP) the composition is skewed to pro residues. A C-type lectin domain is found at 132–248 (MTVGEKVFSS…LYSRLTICEF (117 aa)). 2 disulfides stabilise this stretch: Cys-155–Cys-246 and Cys-224–Cys-238. Residue Asn-207 is glycosylated (N-linked (GlcNAc...) asparagine).

Belongs to the SFTPA family. As to quaternary structure, oligomeric complex of 6 set of homotrimers. Interacts with CD93. (Microbial infection) Binds M.bovis cell surface protein Apa via its glycosylated sites; probably also recognizes other bacterial moieties. In terms of assembly, (Microbial infection) Binds to the S.aureus extracellular adherence protein, Eap, thereby enhancing phagocytosis and killing of S.aureus by alveolar macrophages. As to quaternary structure, (Microbial infection) Interacts with M.pneumoniae CARDS toxin; CARDS probably uses this protein as a receptor. In terms of processing, N-acetylated.

The protein localises to the secreted. It localises to the extracellular space. It is found in the extracellular matrix. The protein resides in the surface film. Its function is as follows. In presence of calcium ions, it binds to surfactant phospholipids and contributes to lower the surface tension at the air-liquid interface in the alveoli of the mammalian lung and is essential for normal respiration. Enhances the expression of MYO18A/SP-R210 on alveolar macrophages. Functionally, (Microbial infection) Recognition of M.tuberculosis by dendritic cells may occur partially via this molecule. Can recognize, bind, and opsonize pathogens to enhance their elimination by alveolar macrophages. (Microbial infection) Binds M.pneumoniae CARDS toxin, serves as one receptor for this pathogen. When SFTPA1 is down-regulated by siRNA, less toxin binds to human cells and less vacuolization (a symptom of M.pneumoniae infection) is seen. The sequence is that of Pulmonary surfactant-associated protein A1 (SFTPA1) from Homo sapiens (Human).